Reading from the N-terminus, the 135-residue chain is Cytochrome b5, seed isoform (135 aa).

A Cytochrome b5 heme-binding domain is found at 5-81 (SKVFTLAEVS…LDEYYVGDID (77 aa)). Heme-binding residues include His-40 and His-64. The helical transmembrane segment at 107-127 (FIVKLLQFLVPLIILGVAFGV) threads the bilayer.

The protein belongs to the cytochrome b5 family. In terms of tissue distribution, specifically expressed in developing seeds.

It is found in the endoplasmic reticulum membrane. Its subcellular location is the microsome membrane. Cytochrome b5 is a membrane bound hemoprotein which function as an electron carrier for several membrane bound oxygenases. May play a key role in the modification by desaturation of fatty acids in the endoplasmic reticulum, which in the developing seed is utilized for membrane synthesis and in the developmentally regulated production of large amounts of storage lipids. This chain is Cytochrome b5, seed isoform, found in Nicotiana tabacum (Common tobacco).